The sequence spans 60 residues: Metallothionein (60 aa).

An N-acetylmethionine modification is found at Met-1. A beta region spans residues 1 to 28; the sequence is MDPCECSKTGTCNCGGSCTCKNCSCTTC. The a divalent metal cation site is built by Cys-4, Cys-6, Cys-12, Cys-14, Cys-18, Cys-20, Cys-23, Cys-25, Cys-28, Cys-32, Cys-33, Cys-35, Cys-36, Cys-40, Cys-43, Cys-47, Cys-49, Cys-54, Cys-58, and Cys-59. Positions 29–60 are alpha; sequence TKSCCPCCPSGCPKCASGCVCKGKTCDTTCCQ.

This sequence belongs to the metallothionein superfamily. Type 1 family.

Metallothioneins have a high content of cysteine residues that bind various heavy metals. This Pseudopleuronectes americanus (Winter flounder) protein is Metallothionein (mt).